The primary structure comprises 386 residues: Tumor necrosis factor receptor superfamily member 10D (386 aa).

Disordered regions lie at residues Met1–Ala25 and Asp62–Ser90. Positions Met1–Ser55 are cleaved as a signal peptide. At Ala56–His211 the chain is on the extracellular side. TNFR-Cys repeat units follow at residues Ile58 to Asn97, Pro98 to Cys139, and Gln140 to Cys180. The span at Val64–Arg75 shows a compositional bias: polar residues. Intrachain disulfides connect Cys83–Cys96, Cys99–Cys115, Cys118–Cys131, Cys121–Cys139, Cys141–Cys155, Cys158–Cys172, and Cys162–Cys180. Asn127 is a glycosylation site (N-linked (GlcNAc...) asparagine). An N-linked (GlcNAc...) asparagine glycan is attached at Asn182. Residues Tyr212–Cys232 traverse the membrane as a helical segment. Topologically, residues Arg233–Leu386 are cytoplasmic. Positions Ser340 to Leu366 constitute a Death; truncated domain.

As to expression, widely expressed, in particular in fetal kidney, lung and liver, and in adult testis and liver. Also expressed in peripheral blood leukocytes, colon and small intestine, ovary, prostate, thymus, spleen, pancreas, kidney, lung, placenta and heart.

It is found in the membrane. Functionally, receptor for the cytotoxic ligand TRAIL. Contains a truncated death domain and hence is not capable of inducing apoptosis but protects against TRAIL-mediated apoptosis. Reports are contradictory with regards to its ability to induce the NF-kappa-B pathway. According to PubMed:9382840, it cannot but according to PubMed:9430226, it can induce the NF-kappa-B pathway. The polypeptide is Tumor necrosis factor receptor superfamily member 10D (Homo sapiens (Human)).